The primary structure comprises 246 residues: Aquaporin AqpM (246 aa).

Residues 1 to 11 (MVSLTKRCIAE) are Cytoplasmic-facing. Residues 12–32 (FIGTFILVFFGAGSAAVTLMI) traverse the membrane as a helical segment. Residues 33 to 55 (ASGGTSPNPFNIGIGLLGGLGDW) are Extracellular-facing. Residues 56 to 76 (VAIGLAFGFAIAASIYALGNI) form a helical membrane-spanning segment. Residues 77–103 (SGCHINPAVTIGLWSVKKFPGREVVPY) are Cytoplasmic-facing. An NPA 1 motif is present at residues 82-84 (NPA). Residues 104–124 (IIAQLLGAAFGSFIFLQCAGI) traverse the membrane as a helical segment. At 125 to 145 (GAATVGGLGATAPFPGISYWQ) the chain is on the extracellular side. The helical transmembrane segment at 146 to 166 (AMLAEVVGTFLLMITIMGIAV) threads the bilayer. Over 167–172 (DERAPK) the chain is Cytoplasmic. Residues 173–193 (GFAGIIIGLTVAGIITTLGNI) form a helical membrane-spanning segment. Residues 194–217 (SGSSLNPARTFGPYLNDMIFAGTN) are Extracellular-facing. The NPA 2 motif lies at 199–201 (NPA). Residues 218 to 238 (LWNYYPIYVIGPIVGAVLAAL) traverse the membrane as a helical segment. Residues 239–246 (TYQYLTSE) are Cytoplasmic-facing.

This sequence belongs to the MIP/aquaporin (TC 1.A.8) family. In terms of assembly, homotetramer.

Its subcellular location is the cell membrane. In terms of biological role, channel that permits osmotically driven movement of water in both directions. It mediates rapid entry or exit of water in response to abrupt changes in osmolarity. Also exhibits a transient but reproducible increase in the initial glycerol flux. The chain is Aquaporin AqpM (aqpM) from Methanothermobacter marburgensis (strain ATCC BAA-927 / DSM 2133 / JCM 14651 / NBRC 100331 / OCM 82 / Marburg) (Methanobacterium thermoautotrophicum).